Consider the following 2080-residue polypeptide: Dedicator of cytokinesis protein 6 (2080 aa).

A compositionally biased stretch (basic and acidic residues) spans 20-31 (EVRKQVSRERSG). 3 disordered regions span residues 20 to 44 (EVRKQVSRERSGSPHSSRRSSSSLG), 156 to 189 (QDTPGDERTGPEDVDDPQHCSGSPEDTPRSSGAS), and 408 to 441 (PQDRDSDSEGERRPTWAERRRRGPQDRGYSGDDA). The span at 32–42 (SPHSSRRSSSS) shows a compositional bias: low complexity. The residue at position 178 (S178) is a Phosphoserine. The span at 408–425 (PQDRDSDSEGERRPTWAE) shows a compositional bias: basic and acidic residues. Residues 546 to 712 (RNLLFVYPHS…GVFSVELTAV (167 aa)) form the C2 DOCK-type domain. Omega-N-methylarginine is present on R863. 3 positions are modified to phosphoserine: S870, S878, and S882. The tract at residues 1101–1123 (ASPSPSVSSTTSQSSTFSSQAPD) is disordered. A compositionally biased stretch (low complexity) spans 1104–1122 (SPSVSSTTSQSSTFSSQAP). Position 1341 is a phosphoserine (S1341). In terms of domain architecture, DOCKER spans 1620-2056 (RGYQGSPDLR…LQPLLTQRLP (437 aa)). T2064 bears the Phosphothreonine mark. A phosphoserine mark is found at S2065 and S2069.

It belongs to the DOCK family. As to expression, widely expressed with highest levels in lung and heart.

The protein resides in the cytoplasm. The protein localises to the perinuclear region. Its function is as follows. Acts as a guanine nucleotide exchange factor (GEF) for CDC42 and RAC1 small GTPases. Through its activation of CDC42 and RAC1, regulates neurite outgrowth in an vitro differentiation system. This is Dedicator of cytokinesis protein 6 (Dock6) from Mus musculus (Mouse).